Reading from the N-terminus, the 287-residue chain is 4-diphosphocytidyl-2-C-methyl-D-erythritol kinase (287 aa).

K14 is a catalytic residue. 98 to 108 lines the ATP pocket; that stretch reads PPGAGLGGGSS. D140 is a catalytic residue.

Belongs to the GHMP kinase family. IspE subfamily.

The enzyme catalyses 4-CDP-2-C-methyl-D-erythritol + ATP = 4-CDP-2-C-methyl-D-erythritol 2-phosphate + ADP + H(+). It functions in the pathway isoprenoid biosynthesis; isopentenyl diphosphate biosynthesis via DXP pathway; isopentenyl diphosphate from 1-deoxy-D-xylulose 5-phosphate: step 3/6. In terms of biological role, catalyzes the phosphorylation of the position 2 hydroxy group of 4-diphosphocytidyl-2C-methyl-D-erythritol. This chain is 4-diphosphocytidyl-2-C-methyl-D-erythritol kinase, found in Methylacidiphilum infernorum (isolate V4) (Methylokorus infernorum (strain V4)).